Here is a 601-residue protein sequence, read N- to C-terminus: MTTQAPPSNLLPLNPEQLARLQAATTDFSPTQLAWVSGYFWGMLNQQPGAVVNAPATAVEIPAITLISASQTGNARRVAEALRDDLLAAKLNVNLVNAGDYKFKQIASEKLVVVVASTQGEGEPAEEAVALHKFLFSKKAPKLDGTAFAVFGLGDTSYEFFCQSGKDFDSKLAELGAERLLDRVDADVEYQAAAAEWRARIVDVLKARVPKDTPAQAANSASGAVNEVSTSPYTKEEPLVASLSVNQKITGRDSEKDVRHIEIDLGDSGLRYQPGDALGVWYQNDPALVKELVELLWLKGTEQVNVEGKTLPLSEALQWHFELTVNTANIVENYATLTRSETLLPLVGDKAKLQHYAATTPIVDMVRFSPAQLDAEALIGLLRPLTPRLYSIASSQAEVESEVHITVGAVRFDIEGRARAGGASSFLADRVEEEGEVRVFIEHNDNFRLPANPETPVIMIGPGTGIAPFRAFMQQRAAEEAPGKNWLFFGNPHFTEDFLYQVEWQRYVKEGVLSRIDLAWSRDQKQKIYVQDKLREQGAELWAWINNGAHLYVCGDANRMAKDVEQALLEVIAEFGGMDIETADEFLSELRVERRYQRDVY.

Residues 64-202 form the Flavodoxin-like domain; that stretch reads ITLISASQTG…AAAEWRARIV (139 aa). Residues 70–75, 117–120, and 153–162 contribute to the FMN site; these read SQTGNA, STQG, and LGDTSYEFFC. The FAD-binding FR-type domain occupies 236-450; the sequence is EEPLVASLSV…IEHNDNFRLP (215 aa). FAD contacts are provided by residues T324, A358, 388–391, 406–408, and 421–424; these read RLYS, TVG, and GGAS. Residues 521 to 522, 527 to 531, and D563 contribute to the NADP(+) site; these read SR and KIYVQ. Position 601 (Y601) interacts with FAD.

This sequence belongs to the NADPH-dependent sulphite reductase flavoprotein subunit CysJ family. The protein in the N-terminal section; belongs to the flavodoxin family. It in the C-terminal section; belongs to the flavoprotein pyridine nucleotide cytochrome reductase family. Alpha(8)-beta(8). The alpha component is a flavoprotein, the beta component is a hemoprotein. It depends on FAD as a cofactor. FMN is required as a cofactor.

It catalyses the reaction hydrogen sulfide + 3 NADP(+) + 3 H2O = sulfite + 3 NADPH + 4 H(+). The protein operates within sulfur metabolism; hydrogen sulfide biosynthesis; hydrogen sulfide from sulfite (NADPH route): step 1/1. In terms of biological role, component of the sulfite reductase complex that catalyzes the 6-electron reduction of sulfite to sulfide. This is one of several activities required for the biosynthesis of L-cysteine from sulfate. The flavoprotein component catalyzes the electron flow from NADPH -&gt; FAD -&gt; FMN to the hemoprotein component. In Enterobacter sp. (strain 638), this protein is Sulfite reductase [NADPH] flavoprotein alpha-component.